We begin with the raw amino-acid sequence, 946 residues long: Inhibin beta chain (946 aa).

Disordered regions lie at residues 115 to 142 and 174 to 194; these read VADR…SSTS and KSRN…RRRR. Over residues 128-142 the composition is skewed to low complexity; the sequence is VSVPTTPNETPSSTS. 4 N-linked (GlcNAc...) asparagine glycosylation sites follow: Asn208, Asn217, Asn271, and Asn389. Residues 436-462 form a disordered region; it reads SPGSHLFNGRGGRTDQRSERDPSHHKY. Residues 447-459 show a composition bias toward basic and acidic residues; that stretch reads GRTDQRSERDPSH. 7 N-linked (GlcNAc...) asparagine glycosylation sites follow: Asn471, Asn484, Asn542, Asn561, Asn566, Asn732, and Asn804. Cystine bridges form between Cys837–Cys846, Cys845–Cys912, Cys874–Cys943, and Cys878–Cys945.

This sequence belongs to the TGF-beta family. As to quaternary structure, homodimer or heterodimer; disulfide-linked. Post-translationally, cleaved in vitro by metalloproteases tok and tld to produce a 30 kDa product. As to expression, widely expressed in larval brains.

It localises to the secreted. Its function is as follows. Controls several aspects of neuronal morphogenesis; essential for optic lobe development, EcR-B1 expression in larval brains, mushroom body remodeling, dorsal neuron morphogenesis and motoneuron axon guidance. Ligands Actbeta and daw act redundantly through the Activin receptor Babo and its transcriptional mediator Smad2 (Smox), to regulate neuroblast numbers and proliferation rates in the developing larval brain. The polypeptide is Inhibin beta chain (Actbeta) (Drosophila melanogaster (Fruit fly)).